The primary structure comprises 114 residues: Small ribosomal subunit protein bS6 (114 aa).

The protein belongs to the bacterial ribosomal protein bS6 family.

Its function is as follows. Binds together with bS18 to 16S ribosomal RNA. This chain is Small ribosomal subunit protein bS6, found in Bacteroides thetaiotaomicron (strain ATCC 29148 / DSM 2079 / JCM 5827 / CCUG 10774 / NCTC 10582 / VPI-5482 / E50).